We begin with the raw amino-acid sequence, 351 residues long: Heat-inducible transcription repressor HrcA (351 aa).

Belongs to the HrcA family.

Functionally, negative regulator of class I heat shock genes (grpE-dnaK-dnaJ and groELS operons). Prevents heat-shock induction of these operons. This Clostridium tetani (strain Massachusetts / E88) protein is Heat-inducible transcription repressor HrcA.